A 467-amino-acid chain; its full sequence is ATP-dependent rRNA helicase rrp3 (467 aa).

The interval 1–48 is disordered; it reads MPGVKKRKVAREAPAPAPAQESDVESSTPEQTQEPEAQEQEQEEGQSK. Residues 48–76 carry the Q motif motif; the sequence is KTFKELGIIEQLCEACETMGYKAPTPIQR. Positions 79 to 250 constitute a Helicase ATP-binding domain; sequence IPLALKGRDL…RASLSNPLRV (172 aa). 92–99 is a binding site for ATP; that stretch reads AETGSGKT. Residues 198-201 carry the DEAD box motif; it reads DEAD. The region spanning 262 to 422 is the Helicase C-terminal domain; it reads TLLQSYLFIP…EYDCPKDEVM (161 aa). The tract at residues 439-467 is disordered; that stretch reads MKDYNEKKGSRGKKFGGKRSRDEMDQEEG.

The protein belongs to the DEAD box helicase family. DDX47/RRP3 subfamily. Interacts with the SSU processome.

The protein resides in the nucleus. It carries out the reaction ATP + H2O = ADP + phosphate + H(+). In terms of biological role, ATP-dependent rRNA helicase required for pre-ribosomal RNA processing. Involved in the maturation of the 35S-pre-rRNA and to its cleavage to mature 18S rRNA. The protein is ATP-dependent rRNA helicase rrp3 of Aspergillus niger (strain ATCC MYA-4892 / CBS 513.88 / FGSC A1513).